The chain runs to 87 residues: Small ribosomal subunit protein bS18 (87 aa).

Basic and acidic residues predominate over residues 1–10; the sequence is MAGKSSGDRR. The disordered stretch occupies residues 1-23; sequence MAGKSSGDRRKPLRGAKGGKNAA.

Belongs to the bacterial ribosomal protein bS18 family. In terms of assembly, part of the 30S ribosomal subunit. Forms a tight heterodimer with protein bS6.

Binds as a heterodimer with protein bS6 to the central domain of the 16S rRNA, where it helps stabilize the platform of the 30S subunit. This is Small ribosomal subunit protein bS18 from Clavibacter michiganensis subsp. michiganensis (strain NCPPB 382).